A 1222-amino-acid chain; its full sequence is PAN2-PAN3 deadenylation complex catalytic subunit PAN2 (1222 aa).

WD repeat units follow at residues 104–143 and 276–315; these read PEMTELRCMSFTAQPHKIIVAGLQSAMFIIDVEKGAIVDQ and ANVAFMLGLEVSPSGEALAINDAECSIHLWGSPSKIHFNE. Residues 316 to 451 form a linker region; sequence IGKETEFSDI…GLKINGETKE (136 aa). The USP domain occupies 452–821; sequence DPLLKYSNVE…SPCTLAYQIS (370 aa). The Exonuclease domain maps to 871 to 1027; the sequence is ALDTEFVDLE…WAVFKEYIQE (157 aa). 3 residues coordinate a divalent metal cation: Asp-873, Glu-875, and Asp-982. A disordered region spans residues 1035–1067; sequence TSITTTTNPNIHDANTSTTTTTAITTTPPEGHD. Low complexity predominate over residues 1050-1061; sequence TSTTTTTAITTT. Asp-1071 contacts a divalent metal cation. 2 disordered regions span residues 1110–1152 and 1167–1222; these read PARY…LSGR and ASVT…SPMR. The segment covering 1119–1133 has biased composition (low complexity); it reads PNPNNNNINNGVNPN. The segment covering 1134-1144 has biased composition (polar residues); it reads GLSTPGSTNPI. Over residues 1180–1191 the composition is skewed to low complexity; sequence NGSMSGSTPSTP. Over residues 1207-1216 the composition is skewed to gly residues; sequence SFGGAKGLTF.

It belongs to the peptidase C19 family. PAN2 subfamily. As to quaternary structure, forms a heterotrimer with an asymmetric homodimer of the regulatory subunit PAN3 to form the poly(A)-nuclease (PAN) deadenylation complex. A divalent metal cation serves as cofactor.

The protein resides in the cytoplasm. The catalysed reaction is Exonucleolytic cleavage of poly(A) to 5'-AMP.. Positively regulated by the regulatory subunit PAN3. Its function is as follows. Catalytic subunit of the poly(A)-nuclease (PAN) deadenylation complex, one of two cytoplasmic mRNA deadenylases involved in mRNA turnover. PAN specifically shortens poly(A) tails of RNA and the activity is stimulated by poly(A)-binding protein PAB1. PAN deadenylation is followed by rapid degradation of the shortened mRNA tails by the CCR4-NOT complex. Deadenylated mRNAs are then degraded by two alternative mechanisms, namely exosome-mediated 3'-5' exonucleolytic degradation, or deadenylation-dependent mRNA decaping and subsequent 5'-3' exonucleolytic degradation by XRN1. May also be involved in post-transcriptional maturation of mRNA poly(A) tails. The chain is PAN2-PAN3 deadenylation complex catalytic subunit PAN2 from Coccidioides immitis (strain RS) (Valley fever fungus).